The sequence spans 75 residues: Antimicrobial peptide ctriporin (75 aa).

An N-terminal signal peptide occupies residues 1 to 22; that stretch reads MDSKYLFVFLIFNVIVIDLCQG. K41 is modified (lysine amide). Positions 47–75 are excised as a propeptide; it reads ELGSQYDYLQDFRKRELDLDDLLSKFPDY.

This sequence belongs to the non-disulfide-bridged peptide (NDBP) superfamily. Short antimicrobial peptide (group 4) family. As to expression, expressed by the venom gland.

It localises to the secreted. It is found in the target cell membrane. In terms of biological role, antimicrobial peptide that acts by breaking the cell wall. Is active against Gram-positive bacteria, fungi and antibiotic-resistant pathogens: S.aureus (MIC=5 ug/ml), M.luteus (MIC=5 ug/ml), B.thuringiensis (MIC=10 ug/ml), B.subtilis (MIC=10 ug/ml), C.albicans (MIC=20 ug/ml), methicillin-resistant S.aureus (MIC=5-10 ug/ml), and penicillin-resistant S.epidermidis (MIC=10 ug/ml). Also shows potent activity against antibiotic-sensitive and -resistant Acinetobacter baumannii (MIC=10-20 uM). Shows cytolytic activity against human erythrocytes. In vivo, is efficient in curing staphylococcal skin infection in mice, when externally applied. The chain is Antimicrobial peptide ctriporin from Chaerilus tricostatus (Scorpion).